A 155-amino-acid polypeptide reads, in one-letter code: Small ribosomal subunit protein uS7cz/uS7cy (155 aa).

Belongs to the universal ribosomal protein uS7 family. In terms of assembly, part of the 30S ribosomal subunit.

Its subcellular location is the plastid. It localises to the chloroplast. One of the primary rRNA binding proteins, it binds directly to 16S rRNA where it nucleates assembly of the head domain of the 30S subunit. The sequence is that of Small ribosomal subunit protein uS7cz/uS7cy (rps7-A) from Populus trichocarpa (Western balsam poplar).